The chain runs to 242 residues: Biosynthetic peptidoglycan transglycosylase (242 aa).

The chain crosses the membrane as a helical span at residues Ile19 to Val39.

It belongs to the glycosyltransferase 51 family.

Its subcellular location is the cell inner membrane. It catalyses the reaction [GlcNAc-(1-&gt;4)-Mur2Ac(oyl-L-Ala-gamma-D-Glu-L-Lys-D-Ala-D-Ala)](n)-di-trans,octa-cis-undecaprenyl diphosphate + beta-D-GlcNAc-(1-&gt;4)-Mur2Ac(oyl-L-Ala-gamma-D-Glu-L-Lys-D-Ala-D-Ala)-di-trans,octa-cis-undecaprenyl diphosphate = [GlcNAc-(1-&gt;4)-Mur2Ac(oyl-L-Ala-gamma-D-Glu-L-Lys-D-Ala-D-Ala)](n+1)-di-trans,octa-cis-undecaprenyl diphosphate + di-trans,octa-cis-undecaprenyl diphosphate + H(+). The protein operates within cell wall biogenesis; peptidoglycan biosynthesis. Functionally, peptidoglycan polymerase that catalyzes glycan chain elongation from lipid-linked precursors. The chain is Biosynthetic peptidoglycan transglycosylase from Salmonella agona (strain SL483).